A 492-amino-acid polypeptide reads, in one-letter code: Phosphoenolpyruvate carboxylase (492 aa).

The protein belongs to the PEPCase type 2 family. In terms of assembly, homotetramer. The cofactor is Mg(2+).

It catalyses the reaction oxaloacetate + phosphate = phosphoenolpyruvate + hydrogencarbonate. Its function is as follows. Catalyzes the irreversible beta-carboxylation of phosphoenolpyruvate (PEP) to form oxaloacetate (OAA), a four-carbon dicarboxylic acid source for the tricarboxylic acid cycle. The chain is Phosphoenolpyruvate carboxylase from Halobacterium salinarum (strain ATCC 29341 / DSM 671 / R1).